We begin with the raw amino-acid sequence, 686 residues long: Rhophilin-2 (686 aa).

The REM-1 domain occupies Asn26–Val100. The interval Gln46–Asn66 is interaction with Rho. In terms of domain architecture, BRO1 spans Pro111–Leu502. The 79-residue stretch at Arg515–Leu593 folds into the PDZ domain. Residue Thr655 is modified to Phosphothreonine.

This sequence belongs to the RHPN family. Interacts with GTP-bound RhoA and RhoB. Interacts with both GTP- and GDP-bound RhoA. Interacts with KRT18.

Its subcellular location is the cytoplasm. The protein localises to the perinuclear region. In terms of biological role, binds specifically to GTP-Rho. May function in a Rho pathway to limit stress fiber formation and/or increase the turnover of F-actin structures in the absence of high levels of RhoA activity. The sequence is that of Rhophilin-2 (Rhpn2) from Mus musculus (Mouse).